A 1252-amino-acid chain; its full sequence is ABC transporter B family member 19 (1252 aa).

N-linked (GlcNAc...) asparagine glycosylation is present at asparagine 5. Residues 41 to 330 (MFVGSLGAIV…SFSNLGAFSK (290 aa)) enclose the ABC transmembrane type-1 1 domain. 2 helical membrane passes run 42–62 (FVGS…FLLF) and 88–108 (LYFV…IACW). Aspartate 136 lines the ATP pocket. A run of 4 helical transmembrane segments spans residues 163-183 (VGNF…GFVS), 187-207 (LALL…LYAY), 274-294 (CTYG…GVFI), and 308-328 (IFSA…LGAF). Brassinolide-binding residues include tyrosine 276 and tryptophan 283. The 237-residue stretch at 365-601 (IEFKDVTFSY…SGAYASLIRF (237 aa)) folds into the ABC transporter 1 domain. Tyrosine 374, serine 376, glycine 405, lysine 406, serine 407, threonine 408, and glutamate 529 together coordinate ATP. Asparagine 641 carries N-linked (GlcNAc...) asparagine glycosylation. The region spanning 687-975 (SIMGAVGSIL…TVSLAPEIIR (289 aa)) is the ABC transmembrane type-1 2 domain. 2 helical membrane-spanning segments follow: residues 688–708 (IMGA…AIVM) and 732–752 (FIYI…HYFF). N-linked (GlcNAc...) asparagine glycosylation is present at asparagine 758. Aspartate 780 serves as a coordination point for ATP. N-linked (GlcNAc...) asparagine glycosylation is found at asparagine 785 and asparagine 814. 3 helical membrane passes run 822-842 (FIVA…TFPL), 914-934 (GFLF…ILWY), and 949-969 (VIKV…TVSL). Positions 965–1252 (ETVSLAPEII…RLLQLQTHRI (288 aa)) are interaction with FKBP42/TWD1. In terms of domain architecture, ABC transporter 2 spans 1010 to 1246 (IEFRHVDFAY…PEGAYSRLLQ (237 aa)). Positions 1019, 1021, 1022, 1051, 1052, and 1053 each coordinate ATP.

This sequence belongs to the ABC transporter superfamily. ABCB family. Multidrug resistance exporter (TC 3.A.1.201) subfamily. Interacts with 1-naphthylphthalamic acid (NPA), and FKBP42/TWD1. Phosphorylated by PHOT1 in phototropic seedlings, to modulates auxin export and distribution and regulates leaf and petiole curling. Ubiquitous, mostly in shoot meristems. Present in the majority of stem cells, predominantly in a non-polar manner. Accumulates in seedlings roots and hypocotyls, and in roots apices and inflorescences.

Its subcellular location is the cell membrane. The catalysed reaction is (indol-3-yl)acetate(in) + ATP + H2O = (indol-3-yl)acetate(out) + ADP + phosphate + H(+). It catalyses the reaction brassinolide(in) + ATP + H2O = brassinolide(out) + ADP + phosphate + H(+). The enzyme catalyses 24-epi-brassinolide(in) + ATP + H2O = 24-epi-brassinolide(out) + ADP + phosphate + H(+). It carries out the reaction 24-epi-castasterone(in) + ATP + H2O = 24-epi-castasterone(out) + ADP + phosphate + H(+). The catalysed reaction is castasterone(in) + ATP + H2O = castasterone(out) + ADP + phosphate + H(+). Transport capacity is stimulated by the chaperone protein FKBP42/TWD1. ATPase activity is specifically activated by bioactive brassinosteroids in a dose-dependent manner, including brassinolide (BL), 24-epiBL and 24-epicastasterone (24-epiCS). Inhibited by vanadate. Functionally, brassinosteroid exporter that, in conjunction with ABCB1, supports the accumulation of exogenous brassinosteroids (BR) in the apoplast, thus promoting BR signaling initiation involving the specific receptor BRI1 and required for plant growth and stress responses. Mediates the transport of castasterone (CSA) and brassinolide (BL) across the plasma membrane. Auxin efflux transporter that acts as a negative regulator of light signaling to promote hypocotyl elongation by mediating leaf tip to petiole auxin flux. Required for the regulation of leaf position and morphology during PHOT1-mediated blue light responses involving auxin distribution, especially in low light fluence. Together with ABCB1 and in a FKBP42/TWD1-dependent manner, supports seed development by promoting stamen elongation and, to a lesser extent, anther dehiscence and pollen maturation, probably as auxin transporters. Contributes to the connective auxin transport (CAT) that ensures communication across the shoot system, including auxin loading at axillary bud apices to influence strigolactone-mediated bud outgrowth responses and shoot branching control. Mediates the accumulation of chlorophyll and anthocyanin, as well as the expression of genes in response to light. Participates in auxin efflux and thus regulates the polar auxin basipetal transport (from auxin-producing leaves to auxin-sensitive tissues, and from root tips to root elongating zone). Involved in diverse auxin-mediated responses including gravitropism, phototropism and lateral root formation. Required for the regulation of organ bending, such as gravitropic root bending. This chain is ABC transporter B family member 19, found in Arabidopsis thaliana (Mouse-ear cress).